Consider the following 88-residue polypeptide: Snakin-1 (88 aa).

An N-terminal signal peptide occupies residues 1–25 (MKLFLLTLLLVTLVITPSLIQTTMA).

Belongs to the GASA family. Post-translationally, six disulfide bonds may be present. Expressed in tubers, stems, axillary and young floral buds, sepals, petals, stamens and carpels, but not in roots, stolons, shoot apex meristem or young leaves.

The protein resides in the secreted. It localises to the cell wall. Functionally, has an antimicrobial activity. Causes a rapid aggregation of both Gram-positive and Gram-negative bacteria, but the antimicrobial activity is not correlated with the capacity to aggregate bacteria. The sequence is that of Snakin-1 (SN1) from Solanum tuberosum (Potato).